We begin with the raw amino-acid sequence, 989 residues long: ATP-dependent 6-phosphofructokinase subunit alpha (989 aa).

An N-terminal catalytic PFK domain 1 region spans residues 1 to 585; that stretch reads MPEPSISDLS…SYENFLSVSK (585 aa). ATP-binding positions include glycine 220, 283–284, and 313–316; these read RC and GDGS. Aspartate 314 serves as a coordination point for Mg(2+). Beta-D-fructose 6-phosphate contacts are provided by residues 359–361, arginine 396, 403–405, glutamate 460, arginine 487, and 493–496; these read SID, MGR, and HVQR. Aspartate 361 acts as the Proton acceptor in catalysis. An interdomain linker region spans residues 586–599; that stretch reads YDDGSYLVPESSRL. Residues 600-989 form a C-terminal regulatory PFK domain 2 region; that stretch reads NIAIIHVGAP…LSGRLSIRTT (390 aa). Beta-D-fructose 2,6-bisphosphate is bound by residues arginine 670, 727–731, arginine 765, 772–774, glutamate 832, arginine 858, 864–867, and arginine 963; these read TVSNN, QGG, and HVQQ.

The protein belongs to the phosphofructokinase type A (PFKA) family. ATP-dependent PFK group I subfamily. Eukaryotic two domain clade 'E' sub-subfamily. Heterododecamer of 4 alpha, 4 beta and 4 gamma chains. Requires Mg(2+) as cofactor.

The protein resides in the cytoplasm. It catalyses the reaction beta-D-fructose 6-phosphate + ATP = beta-D-fructose 1,6-bisphosphate + ADP + H(+). It participates in carbohydrate degradation; glycolysis; D-glyceraldehyde 3-phosphate and glycerone phosphate from D-glucose: step 3/4. Allosterically activated by ADP, AMP, or fructose 2,6-bisphosphate, and allosterically inhibited by ATP or citrate. Catalyzes the phosphorylation of D-fructose 6-phosphate to fructose 1,6-bisphosphate by ATP, the first committing step of glycolysis. This chain is ATP-dependent 6-phosphofructokinase subunit alpha (PFK1), found in Komagataella pastoris (Yeast).